Consider the following 2642-residue polypeptide: Fusarielin synthase FSL1 (2642 aa).

The 445-residue stretch at 6-450 folds into the Ketosynthase family 3 (KS3) domain; sequence NEPIAIIGTG…GTNAHAILEA (445 aa). Residues cysteine 179, histidine 318, and histidine 370 each act as for beta-ketoacyl synthase activity in the active site. Residues 566–890 are malonyl-CoA:ACP transacylase (MAT) domain; that stretch reads VFTGQGAQWA…PYTSALVRGK (325 aa). Serine 659 (for malonyltransferase activity) is an active-site residue. Residues 965–1101 form an N-terminal hotdog fold region; sequence HDLLGIQTAD…GKVCIFLQTE (137 aa). Residues 965-1279 are dehydratase (DH) domain; sequence HDLLGIQTAD…SFSPFAAATD (315 aa). One can recognise a PKS/mFAS DH domain in the interval 965–1280; sequence HDLLGIQTAD…FSPFAAATDR (316 aa). Histidine 997 (proton acceptor; for dehydratase activity) is an active-site residue. The tract at residues 1126-1280 is C-terminal hotdog fold; it reads MAGIDVERFY…FSPFAAATDR (155 aa). The active-site Proton donor; for dehydratase activity is aspartate 1189. A methyltransferase (MET) domain region spans residues 1423–1622; that stretch reads NYLDRYYTHA…GVDTNTPMPD (200 aa). The interval 2244 to 2423 is ketoreductase (KR) domain; the sequence is TYWMLGLTGD…GHNAAVIDIS (180 aa). The 80-residue stretch at 2556-2635 folds into the Carrier domain; sequence QEVTSVLTSC…DLADYILESL (80 aa). Serine 2595 carries the post-translational modification O-(pantetheine 4'-phosphoryl)serine.

Requires pantetheine 4'-phosphate as cofactor.

Its pathway is secondary metabolite biosynthesis. In terms of biological role, reducing polyketide synthase; part of the gene cluster that mediates the biosynthesis of fusarielins F, G and H, decaketide compounds with 5 methylations and a decaline core that act as mycoestrogens as they stimulate growth of MCF-7 breast cancer cells. The initial compound in the pathway is produced by the reducing polyketide synthase FSL1. FSL1 lacks an active enoyl reductase (ER) domain and biosynthesis of fusarielins relies on the trans-acting enoyl reductase FSL5, before it is released through hydrolysis catalyzed by the thioesterase FSL2. Fusarielins F, G, and H have a C11=C12 cis double bond and is fully reduced between C10 and C11 and between C12 and C13. FSL3 can be involved in the formation of the C11=C12 cis double bond by moving a hypothetical C10=C11 or C12=C13 trans double bond to form prefusarielin. Prefusarielin is oxygenated at C15 and C16 by the cytochrome P450 monooxygenase FSL4, resulting in fusarielin F, which subsequently is epoxidized into fusarielin G by the same enzyme. The final step in the pathway is a reduction of the carboxylic acid moiety to yield fusarielin H via a still undetermined mechanism. This Gibberella zeae (strain ATCC MYA-4620 / CBS 123657 / FGSC 9075 / NRRL 31084 / PH-1) (Wheat head blight fungus) protein is Fusarielin synthase FSL1.